The sequence spans 318 residues: Mitochondrial coenzyme A transporter SLC25A42 (318 aa).

3 Solcar repeats span residues 31–117 (RQVL…YKRI), 129–214 (LPPW…LKSL), and 224–312 (PYPF…MQIL). The next 6 helical transmembrane spans lie at 33–53 (VLSS…AVAP), 89–109 (LWRG…IQFS), 135–155 (LFAG…LDLV), 186–206 (LYHG…LSFF), 230–250 (MIFG…LDVV), and 293–313 (VKGP…QILL).

It belongs to the mitochondrial carrier (TC 2.A.29) family.

The protein resides in the mitochondrion inner membrane. The enzyme catalyses ADP(out) + CoA(in) = ADP(in) + CoA(out). It catalyses the reaction 3'-dephospho-CoA(in) + ADP(out) = 3'-dephospho-CoA(out) + ADP(in). It carries out the reaction adenosine 3',5'-bisphosphate(in) + ADP(out) = adenosine 3',5'-bisphosphate(out) + ADP(in). The catalysed reaction is AMP(in) + ADP(out) = AMP(out) + ADP(in). The enzyme catalyses dADP(in) + ADP(out) = dADP(out) + ADP(in). It catalyses the reaction ADP(in) + ATP(out) = ADP(out) + ATP(in). Mitochondrial carrier mediating the transport of coenzyme A (CoA) in mitochondria in exchange for intramitochondrial (deoxy)adenine nucleotides and adenosine 3',5'-diphosphate. The sequence is that of Mitochondrial coenzyme A transporter SLC25A42 (SLC25A42) from Homo sapiens (Human).